A 378-amino-acid polypeptide reads, in one-letter code: UPF0754 membrane protein BCA_0919 (378 aa).

A run of 2 helical transmembrane segments spans residues 1–21 and 357–377; these read MNIWLSMLTTTGLGAIIGGFT and YLGALLGGMIGIVQGLLLLFL.

The protein belongs to the UPF0754 family.

Its subcellular location is the cell membrane. This is UPF0754 membrane protein BCA_0919 from Bacillus cereus (strain 03BB102).